The chain runs to 695 residues: Pre-mRNA-splicing factor CLF1 (695 aa).

HAT repeat units lie at residues 41-73 (DVQR…FEIE), 75-107 (HDMR…SELK), 109-141 (GYIN…VEES), 143-174 (AHFD…FEVR), 176-207 (ERYE…FEVR), 296-328 (TIIL…LLEN), 333-365 (LVME…IWIK), 375-412 (NDIP…FEIR), 414-445 (DNLE…LETK), 447-479 (REFD…FEDS), 521-553 (QNFD…KKLT), and 591-629 (NNKD…FEGQ).

This sequence belongs to the crooked-neck family. As to quaternary structure, associated with the spliceosome.

It is found in the nucleus. Its function is as follows. Involved in pre-mRNA splicing and cell cycle progression. Required for the spliceosome assembly and initiation of the DNA replication. This chain is Pre-mRNA-splicing factor CLF1 (CLF1), found in Candida glabrata (strain ATCC 2001 / BCRC 20586 / JCM 3761 / NBRC 0622 / NRRL Y-65 / CBS 138) (Yeast).